A 311-amino-acid chain; its full sequence is Malate dehydrogenase (311 aa).

NAD(+) is bound by residues 7-13 (GAAGGIG) and aspartate 34. Residues arginine 81 and arginine 87 each coordinate substrate. NAD(+) contacts are provided by residues asparagine 94 and 117 to 119 (ITN). 2 residues coordinate substrate: asparagine 119 and arginine 153. Catalysis depends on histidine 177, which acts as the Proton acceptor. Methionine 227 contacts NAD(+).

The protein belongs to the LDH/MDH superfamily. MDH type 1 family. As to quaternary structure, homodimer.

The enzyme catalyses (S)-malate + NAD(+) = oxaloacetate + NADH + H(+). Catalyzes the reversible oxidation of malate to oxaloacetate. This chain is Malate dehydrogenase, found in Shewanella loihica (strain ATCC BAA-1088 / PV-4).